An 83-amino-acid chain; its full sequence is Protein CASPARIAN STRIP INTEGRITY FACTOR 1 (83 aa).

Positions 1-22 (MGMSPLTVKKLGFIFMIVSASA) are cleaved as a signal peptide. Residues 59–83 (MNTKDYGNNSPSPRLERPPFKLIPN) form a disordered region. Tyr64 bears the Sulfotyrosine mark. Pro69 and Pro71 each carry hydroxyproline.

As to quaternary structure, interacts with the specific receptor kinases GSO1 and GSO2. Expressed exclusively in the root stele.

Its function is as follows. Peptide hormone required for contiguous Casparian strip diffusion barrier formation in roots via the regulation of CASPs protein expression and distribution in a GSO1-GSO2 signaling pathway. The Casparian strip is required for ion homeostasis (e.g. iron and potassium ions). This chain is Protein CASPARIAN STRIP INTEGRITY FACTOR 1, found in Arabidopsis thaliana (Mouse-ear cress).